The primary structure comprises 432 residues: D-amino acid dehydrogenase (432 aa).

Residue 3-17 (VVILGSGVVGVASAW) participates in FAD binding.

Belongs to the DadA oxidoreductase family. Requires FAD as cofactor.

It carries out the reaction a D-alpha-amino acid + A + H2O = a 2-oxocarboxylate + AH2 + NH4(+). It functions in the pathway amino-acid degradation; D-alanine degradation; NH(3) and pyruvate from D-alanine: step 1/1. Its function is as follows. Oxidative deamination of D-amino acids. This Klebsiella pneumoniae (strain 342) protein is D-amino acid dehydrogenase.